Reading from the N-terminus, the 205-residue chain is Protein PAXX (205 aa).

The 43-residue stretch at 39–81 folds into the PISA domain; the sequence is FNLYVTDAAELWSTCFSPDSLARLKARFGLSGAEDIHSRFRAA. Residue Thr-147 is modified to Phosphothreonine. The segment covering 147–159 has biased composition (polar residues); it reads TITSPKKNTQPAG. Positions 147–205 are disordered; sequence TITSPKKNTQPAGTQFLPELDHQRGSSGPGVRRRCPGESLINPGFKSKKPAAGVDFDET. A Phosphoserine modification is found at Ser-150. The segment at 172–205 is mediates interaction with XRCC5/Ku80 and XRCC6/Ku70 and association with the non-homologous end joining core complex; it reads SSGPGVRRRCPGESLINPGFKSKKPAAGVDFDET. The XLM signature appears at 191 to 205; it reads FKSKKPAAGVDFDET.

Belongs to the XRCC4-XLF family. PAXX subfamily. As to quaternary structure, homodimer. Interacts with the DNA-bound XRCC5/Ku80 and XRCC6/Ku70 heterodimer (Ku complex); the interaction is direct. Associated component of the non-homologous end joining (NHEJ) complex, composed of the core proteins PRKDC, LIG4, XRCC4, XRCC6/Ku70, XRCC5/Ku86 and NHEJ1/XLF. Interacts with POLL (DNA polymerase lambda); promoting POLL recruitment to double-strand breaks (DSBs) and stimulation of the end-filling activity of POLL. Phosphorylation may inhibit interaction with the DNA-bound XRCC5/Ku80 and XRCC6/Ku70 heterodimer (Ku complex).

Its subcellular location is the nucleus. It is found in the chromosome. In terms of biological role, non-essential DNA repair protein involved in DNA non-homologous end joining (NHEJ); participates in double-strand break (DSB) repair and V(D)J recombination. May act as a scaffold required for accumulation of the Ku heterodimer, composed of XRCC5/Ku80 and XRCC6/Ku70, at double-strand break sites and promote the assembly and/or stability of the NHEJ machinery. Involved in NHEJ by promoting the ligation of blunt-ended DNA ends. Together with NHEJ1/XLF, collaborates with DNA polymerase lambda (POLL) to promote joining of non-cohesive DNA ends. Constitutes a non-essential component of classical NHEJ: has a complementary but distinct function with NHEJ1/XLF in DNA repair. The sequence is that of Protein PAXX from Mus musculus (Mouse).